The chain runs to 58 residues: Small ribosomal subunit protein eS31 (58 aa).

Zn(2+) contacts are provided by cysteine 29, cysteine 32, cysteine 48, and cysteine 51. Residues 29–51 form a C4-type zinc finger; it reads CPRCGSFMAHHLKPVPRWHCGKC.

The protein belongs to the eukaryotic ribosomal protein eS31 family. As to quaternary structure, part of the 30S ribosomal subunit. Zn(2+) is required as a cofactor.

This Ignicoccus hospitalis (strain KIN4/I / DSM 18386 / JCM 14125) protein is Small ribosomal subunit protein eS31.